A 412-amino-acid polypeptide reads, in one-letter code: UPF0754 membrane protein MAE_37850 (412 aa).

2 helical membrane passes run 3–23 (LPTL…GYFT) and 387–407 (IVNL…IILI).

It belongs to the UPF0754 family.

The protein localises to the cell inner membrane. In Microcystis aeruginosa (strain NIES-843 / IAM M-2473), this protein is UPF0754 membrane protein MAE_37850.